Reading from the N-terminus, the 417-residue chain is Spermidine/putrescine import ATP-binding protein PotA (417 aa).

In terms of domain architecture, ABC transporter spans 5-308 (IILKDLTKVF…PANRFVAQFV (304 aa)). 37 to 44 (GPSGCGKT) serves as a coordination point for ATP. An insert region spans residues 105–177 (DFNSKIKANL…TALKCKKINK (73 aa)).

The protein belongs to the ABC transporter superfamily. Spermidine/putrescine importer (TC 3.A.1.11.1) family. In terms of assembly, the complex is composed of two ATP-binding proteins (PotA), two transmembrane proteins (PotB and PotC) and a solute-binding protein (PotD).

The protein localises to the cell membrane. It catalyses the reaction ATP + H2O + polyamine-[polyamine-binding protein]Side 1 = ADP + phosphate + polyamineSide 2 + [polyamine-binding protein]Side 1.. Its function is as follows. Part of the ABC transporter complex PotABCD involved in spermidine/putrescine import. Responsible for energy coupling to the transport system. The polypeptide is Spermidine/putrescine import ATP-binding protein PotA (Onion yellows phytoplasma (strain OY-M)).